A 276-amino-acid polypeptide reads, in one-letter code: MRLVILDNYDLASEWAAKYICNRIIQFRPGQDRYFTLGLPTGSTPLGCYKKLIEYHKNGDLSFKYVKTFNMDEYVGLPRNHPESYHSYMWNNFFKHIDIDPNNAHILDGNATDLQAECDAFEKKIKEAGGIDLFVGGIGPDGHIAFNEPGSSLVSRTRLKTLAMDTILANAKYFDGDLSKVPTMALTVGVGTVMDAREVMILITGAHKAFALYKAIEEGVNHMWTVSAFQQHPRTIFVCDEDATLELRVKTVKYFKGLMHVHNKLVDPLYSMKEGN.

Asp72 serves as the catalytic Proton acceptor; for enolization step. Residues 106–130 (ILDGNATDLQAECDAFEKKIKEAGG) are a coiled coil. Asp141 functions as the For ring-opening step in the catalytic mechanism. The Proton acceptor; for ring-opening step role is filled by His143. The active-site For ring-opening step is the Glu148. Phosphothreonine is present on Thr161.

Belongs to the glucosamine/galactosamine-6-phosphate isomerase family. Homohexamer.

The protein localises to the cytoplasm. The enzyme catalyses alpha-D-glucosamine 6-phosphate + H2O = beta-D-fructose 6-phosphate + NH4(+). It functions in the pathway nucleotide-sugar biosynthesis; UDP-N-acetyl-alpha-D-glucosamine biosynthesis; alpha-D-glucosamine 6-phosphate from D-fructose 6-phosphate: step 1/1. Its activity is regulated as follows. Allosterically activated by N-acetylglucosamine-6-phosphate (GlcNAc6P). In terms of biological role, catalyzes the reversible conversion of alpha-D-glucosamine 6-phosphate (GlcN-6P) into beta-D-fructose 6-phosphate (Fru-6P) and ammonium ion, a regulatory reaction step in de novo uridine diphosphate-N-acetyl-alpha-D-glucosamine (UDP-GlcNAc) biosynthesis via hexosamine pathway. Deamination is coupled to aldo-keto isomerization mediating the metabolic flux from UDP-GlcNAc toward Fru-6P. At high ammonium level can drive amination and isomerization of Fru-6P toward hexosamines and UDP-GlcNAc synthesis. Has a role in fine tuning the metabolic fluctuations of cytosolic UDP-GlcNAc and their effects on hyaluronan synthesis that occur during tissue remodeling. In Bos taurus (Bovine), this protein is Glucosamine-6-phosphate deaminase 2.